The sequence spans 112 residues: C-C motif chemokine 27 (112 aa).

The signal sequence occupies residues 1 to 24; sequence MKGPPTFCSLLLLSLLLSPDPTAA. 2 disulfide bridges follow: C33–C62 and C34–C77.

This sequence belongs to the intercrine beta (chemokine CC) family. Monomer, dimer, and tetramer. Heparin avidly promotes oligomerization. Interacts with TNFAIP6 (via Link domain). As to expression, testis, thymus, placenta, ovary and skin.

Its subcellular location is the secreted. Its function is as follows. Chemotactic factor that attracts skin-associated memory T-lymphocytes. May play a role in mediating homing of lymphocytes to cutaneous sites. Binds to CCR10. The polypeptide is C-C motif chemokine 27 (CCL27) (Homo sapiens (Human)).